The primary structure comprises 288 residues: Acetyl-coenzyme A carboxylase carboxyl transferase subunit beta (288 aa).

The CoA carboxyltransferase N-terminal domain maps to 32–288 (LFAKCPACKH…LELHTEVENV (257 aa)). Zn(2+) is bound by residues C36, C39, C54, and C57. A C4-type zinc finger spans residues 36-57 (CPACKHTIYQKDLGKNKVCPNC).

The protein belongs to the AccD/PCCB family. In terms of assembly, acetyl-CoA carboxylase is a heterohexamer composed of biotin carboxyl carrier protein (AccB), biotin carboxylase (AccC) and two subunits each of ACCase subunit alpha (AccA) and ACCase subunit beta (AccD). Zn(2+) serves as cofactor.

It is found in the cytoplasm. The catalysed reaction is N(6)-carboxybiotinyl-L-lysyl-[protein] + acetyl-CoA = N(6)-biotinyl-L-lysyl-[protein] + malonyl-CoA. Its pathway is lipid metabolism; malonyl-CoA biosynthesis; malonyl-CoA from acetyl-CoA: step 1/1. Functionally, component of the acetyl coenzyme A carboxylase (ACC) complex. Biotin carboxylase (BC) catalyzes the carboxylation of biotin on its carrier protein (BCCP) and then the CO(2) group is transferred by the transcarboxylase to acetyl-CoA to form malonyl-CoA. The polypeptide is Acetyl-coenzyme A carboxylase carboxyl transferase subunit beta (Lactococcus lactis subsp. cremoris (strain MG1363)).